Reading from the N-terminus, the 4083-residue chain is Dynein heavy chain, cytoplasmic (4083 aa).

A stem region spans residues 1–1745 (MTDDQVAQAL…TIEQSCVSFC (1745 aa)). Coiled coils occupy residues 127 to 166 (DAVVSTNSNLEAKQESINSARRKIKDLSLSLQSLQQFIEV), 381 to 402 (INQWEALLKEFTSLIRELMRKR), and 801 to 821 (KLDLQNLEVLINKIQLLVDQA). 4 AAA regions span residues 1746 to 1967 (YGFE…VLRN), 2026 to 2265 (SYLA…YKAD), 2373 to 2622 (SLES…WVRG), and 2716 to 2980 (TFAE…GNSQ). Residues 1784 to 1791 (GPAGTGKT), 2064 to 2071 (GDAGTGKT), 2412 to 2419 (GPPGSGKT), and 2754 to 2761 (GPNYSGKT) contribute to the ATP site. The segment at 2987 to 3294 (LTSLRRFQSL…RSIKLMESLT (308 aa)) is stalk. Coiled coils occupy residues 3015-3085 (LEKL…NERR), 3223-3302 (LKEE…RWIK), and 3527-3607 (LEKE…VEDL). AAA regions lie at residues 3364-3592 (MVNP…EIAK) and 3748-3952 (LKSL…FLDH).

It belongs to the dynein heavy chain family. In terms of assembly, consists of at least two heavy chains and a number of intermediate and light chains.

The protein resides in the cytoplasm. It is found in the cytoskeleton. Its function is as follows. Cytoplasmic dynein acts as a motor for the intracellular retrograde motility of vesicles and organelles along microtubules. Dynein has ATPase activity; the force-producing power stroke is thought to occur on release of ADP. Required to maintain uniform nuclear distribution in hyphae. May play an important role in the proper orientation of the mitotic spindle into the budding daughter cell yeast. Probably required for normal progression of the cell cycle. This is Dynein heavy chain, cytoplasmic (DYN1) from Eremothecium gossypii (strain ATCC 10895 / CBS 109.51 / FGSC 9923 / NRRL Y-1056) (Yeast).